Here is a 172-residue protein sequence, read N- to C-terminus: SsrA-binding protein (172 aa).

It belongs to the SmpB family.

It localises to the cytoplasm. Its function is as follows. Required for rescue of stalled ribosomes mediated by trans-translation. Binds to transfer-messenger RNA (tmRNA), required for stable association of tmRNA with ribosomes. tmRNA and SmpB together mimic tRNA shape, replacing the anticodon stem-loop with SmpB. tmRNA is encoded by the ssrA gene; the 2 termini fold to resemble tRNA(Ala) and it encodes a 'tag peptide', a short internal open reading frame. During trans-translation Ala-aminoacylated tmRNA acts like a tRNA, entering the A-site of stalled ribosomes, displacing the stalled mRNA. The ribosome then switches to translate the ORF on the tmRNA; the nascent peptide is terminated with the 'tag peptide' encoded by the tmRNA and targeted for degradation. The ribosome is freed to recommence translation, which seems to be the essential function of trans-translation. The sequence is that of SsrA-binding protein from Dehalococcoides mccartyi (strain ATCC BAA-2100 / JCM 16839 / KCTC 5957 / BAV1).